The following is a 259-amino-acid chain: MLVVISPAKRLDWAERDVPVTQPDFQEDAVRLSKTARNLTLGSLKSLMGLSDDLARLNRDRFNAFAEDPAPEATRPAALAFAGDTYQGLEATSLDENERAWAQDHLRILSGLYGVLRPLDAIQPYRLEMGSRLKTRRGSNLYEYWRDDLSKALNAQAQSVGTDVLINCASQEYFGAVAPKALKLRVITPAFMEDKNDGKGPKIVSFFAKKARGAMARFVIQNRLSDPDALTGFDTGGYAYQPELSTPDKPVFIRPYPAS.

This sequence belongs to the UPF0246 family.

This is UPF0246 protein RD1_0358 from Roseobacter denitrificans (strain ATCC 33942 / OCh 114) (Erythrobacter sp. (strain OCh 114)).